Consider the following 169-residue polypeptide: Transcription regulatory protein SNF11 (169 aa).

The interval 1–24 (MSSEIAYSNTNTNTENENRNTGAG) is disordered. Ser-2 is subject to N-acetylserine. The segment covering 9–21 (NTNTNTENENRNT) has biased composition (low complexity). 8 repeat units span residues 28-31 (NTNA), 32-35 (NANA), 36-39 (NATA), 40-43 (NATA), 44-47 (NATA), 48-51 (NATA), 76-80 (LLARV), and 160-165 (LLLARV). Positions 28 to 51 (NTNANANANATANATANATANATA) are 6 X 4 AA tandem repeats of N-[AT]-[NT]-A. Residues 76–165 (LLARVIQMNN…SKLYLLLARV (90 aa)) are 2 X 5 AA repeats of L-L-A-R-V.

In terms of assembly, component of the SWI/SNF global transcription activator complex. The 1.14 MDa SWI/SNF complex is composed of 11 different subunits: one copy each of SWI1, SNF2/SWI2, SNF5, SNF12/SWP73, ARP7/SWP61, ARP9/SWP59; two copies each of SWI3, SNF6, SNF11, SWP82; and three copies of TAF14/SWP29.

It is found in the nucleus. Involved in transcriptional activation. Component of the SWI/SNF complex, an ATP-dependent chromatin remodeling complex, which is required for the positive and negative regulation of gene expression of a large number of genes. It changes chromatin structure by altering DNA-histone contacts within a nucleosome, leading eventually to a change in nucleosome position, thus facilitating or repressing binding of gene-specific transcription factors. This chain is Transcription regulatory protein SNF11 (SNF11), found in Saccharomyces cerevisiae (strain ATCC 204508 / S288c) (Baker's yeast).